The chain runs to 435 residues: Cytochrome c biogenesis protein CcsB (435 aa).

3 helical membrane passes run 11-31 (LRVA…GTAL), 69-89 (SDWF…CSWR), and 159-179 (VGPL…VWGV).

Belongs to the Ccs1/CcsB family. In terms of assembly, may interact with CcsA.

It localises to the plastid. Its subcellular location is the organellar chromatophore thylakoid membrane. In terms of biological role, required during biogenesis of c-type cytochromes (cytochrome c6 and cytochrome f) at the step of heme attachment. In Paulinella chromatophora, this protein is Cytochrome c biogenesis protein CcsB.